Consider the following 276-residue polypeptide: F420-dependent methylenetetrahydromethanopterin dehydrogenase (276 aa).

The disordered stretch occupies residues 253–276; it reads TVLRTPHGKEGKTLSKKDLLAKPE. A compositionally biased stretch (basic and acidic residues) spans 259–276; the sequence is HGKEGKTLSKKDLLAKPE.

It belongs to the MTD family. Found to be tightly associated with methyl-coenzyme M methylreductase.

It carries out the reaction 5,10-methylenetetrahydromethanopterin + oxidized coenzyme F420-(gamma-L-Glu)(n) + 2 H(+) = 5,10-methenyl-5,6,7,8-tetrahydromethanopterin + reduced coenzyme F420-(gamma-L-Glu)(n). The protein operates within one-carbon metabolism; methanogenesis from CO(2); 5,10-methylene-5,6,7,8-tetrahydromethanopterin from 5,10-methenyl-5,6,7,8-tetrahydromethanopterin (coenzyme F420 route): step 1/1. With respect to regulation, activity requires salt; 100 mM sodium or potassium salts of chloride, phosphate or sulfate are equally effective. Not inactivated by O(2). Inhibited by hydrogen-producing 5,10-methenyltetrahydromethanopterin hydrogenase which has a higher affinity for their shared substrate. Enzyme is O(2)-stable and strictly dependent on coenzyme F420. Functionally, catalyzes the reversible reduction of methenyl-H(4)MPT(+) to methylene-H(4)MPT. In Methanothermobacter marburgensis (strain ATCC BAA-927 / DSM 2133 / JCM 14651 / NBRC 100331 / OCM 82 / Marburg) (Methanobacterium thermoautotrophicum), this protein is F420-dependent methylenetetrahydromethanopterin dehydrogenase.